The chain runs to 190 residues: Peptidoglycan recognition protein 1 (190 aa).

The N-terminal stretch at 1 to 21 is a signal peptide; it reads MSRRYTPLAWVLLALLGLGAA. Gln-22 is modified (pyrrolidone carboxylic acid). 3 disulfides stabilise this stretch: Cys-24/Cys-148, Cys-40/Cys-85, and Cys-61/Cys-67. Residues 46-174 form the N-acetylmuramoyl-L-alanine amidase domain; it reads QPVRYVVVSH…RDVQQTLSPG (129 aa).

The protein belongs to the N-acetylmuramoyl-L-alanine amidase 2 family. As to quaternary structure, homodimer; disulfide-linked. In terms of tissue distribution, synthesized only in bone marrow. The mature protein is stored in the cytoplasmic granules of eosinophils and neutrophils but is absent from monocytes, lymphocytes, or platelets.

Its subcellular location is the secreted. The protein localises to the cytoplasmic granule. Its function is as follows. Innate immunity protein that plays several important functions in antimicrobial and antitumor defense systems. Acts as a pattern receptor that binds to murein peptidoglycans (PGN) of Gram-positive bacteria and thus provides bactericidal activity. Forms an equimolar complex with heat shock protein HSPA1A and induces programmed cell death through apoptosis and necroptosis in tumor cell lines by activating the TNFR1 receptor on the target cell membrane. In addition, acts in complex with the Ca(2+)-binding protein S100A4 as a chemoattractant able to induce lymphocyte movement. Mechanistically, this complex acts as a ligand of the chemotactic receptors CCR5 and CXCR3 which are present on the cells of the immune system. Also promotes the activation of lymphocytes that become able to kill virus-infected cells as well as tumor cells by modulating the spectrum of their target-cell specificity. Induction of cytotoxicity on monocyte surface requires interaction with TREM1 receptor. The sequence is that of Peptidoglycan recognition protein 1 (PGLYRP1) from Bos taurus (Bovine).